A 191-amino-acid chain; its full sequence is Glycerol-3-phosphate acyltransferase (191 aa).

A run of 6 helical transmembrane segments spans residues 7-27 (ILVLSYLIGSIPFGLILSYIG), 51-71 (KLAVVTLILDSLKGFVSVMLA), 80-100 (FVFMSALFSIIGHMFPVWLSF), 115-135 (FIEYKFVIYFTIFWIIVFVIF), 139-159 (SLSSIISTISIMLLVYTHYSA), and 161-181 (ESITFLVMSLLVIVQHIENIV).

It belongs to the PlsY family. As to quaternary structure, probably interacts with PlsX.

It is found in the cell inner membrane. It catalyses the reaction an acyl phosphate + sn-glycerol 3-phosphate = a 1-acyl-sn-glycero-3-phosphate + phosphate. Its pathway is lipid metabolism; phospholipid metabolism. Its function is as follows. Catalyzes the transfer of an acyl group from acyl-phosphate (acyl-PO(4)) to glycerol-3-phosphate (G3P) to form lysophosphatidic acid (LPA). This enzyme utilizes acyl-phosphate as fatty acyl donor, but not acyl-CoA or acyl-ACP. The polypeptide is Glycerol-3-phosphate acyltransferase (Ehrlichia canis (strain Jake)).